The primary structure comprises 255 residues: Imidazole glycerol phosphate synthase subunit HisF (255 aa).

Active-site residues include Asp-12 and Asp-131.

The protein belongs to the HisA/HisF family. As to quaternary structure, heterodimer of HisH and HisF.

The protein resides in the cytoplasm. The catalysed reaction is 5-[(5-phospho-1-deoxy-D-ribulos-1-ylimino)methylamino]-1-(5-phospho-beta-D-ribosyl)imidazole-4-carboxamide + L-glutamine = D-erythro-1-(imidazol-4-yl)glycerol 3-phosphate + 5-amino-1-(5-phospho-beta-D-ribosyl)imidazole-4-carboxamide + L-glutamate + H(+). It functions in the pathway amino-acid biosynthesis; L-histidine biosynthesis; L-histidine from 5-phospho-alpha-D-ribose 1-diphosphate: step 5/9. Its function is as follows. IGPS catalyzes the conversion of PRFAR and glutamine to IGP, AICAR and glutamate. The HisF subunit catalyzes the cyclization activity that produces IGP and AICAR from PRFAR using the ammonia provided by the HisH subunit. This is Imidazole glycerol phosphate synthase subunit HisF from Ignicoccus hospitalis (strain KIN4/I / DSM 18386 / JCM 14125).